The primary structure comprises 239 residues: Tetraspanin-9 (239 aa).

3 helical membrane passes run 14–34, 56–76, and 86–106; these read FLFN…GIWL, LVIA…LGAI, and FFIV…LFFV. N180 and N181 each carry an N-linked (GlcNAc...) asparagine glycan. The helical transmembrane segment at 204–224 threads the bilayer; that stretch reads VLGTVGMCLLITQILGMAFSM.

This sequence belongs to the tetraspanin (TM4SF) family. As to quaternary structure, found in a complex with GP6. In terms of processing, glycosylated.

The protein resides in the membrane. The protein is Tetraspanin-9 (TSPAN9) of Ovis aries (Sheep).